Reading from the N-terminus, the 100-residue chain is Large ribosomal subunit protein uL23 (100 aa).

The protein belongs to the universal ribosomal protein uL23 family. Part of the 50S ribosomal subunit. Contacts protein L29, and trigger factor when it is bound to the ribosome.

Its function is as follows. One of the early assembly proteins it binds 23S rRNA. One of the proteins that surrounds the polypeptide exit tunnel on the outside of the ribosome. Forms the main docking site for trigger factor binding to the ribosome. This Prochlorococcus marinus (strain MIT 9312) protein is Large ribosomal subunit protein uL23.